The following is a 200-amino-acid chain: Holliday junction resolvase RecU (200 aa).

The disordered stretch occupies residues Met1 to Ala27. Residues Thr84, Asp86, Glu99, and Gln118 each contribute to the Mg(2+) site.

The protein belongs to the RecU family. Homodimer. Requires Mg(2+) as cofactor.

The protein resides in the cytoplasm. The catalysed reaction is Endonucleolytic cleavage at a junction such as a reciprocal single-stranded crossover between two homologous DNA duplexes (Holliday junction).. In terms of biological role, endonuclease that resolves Holliday junction intermediates in genetic recombination. Cleaves mobile four-strand junctions by introducing symmetrical nicks in paired strands. Promotes annealing of linear ssDNA with homologous dsDNA. Required for DNA repair, homologous recombination and chromosome segregation. This is Holliday junction resolvase RecU from Geobacillus kaustophilus (strain HTA426).